The primary structure comprises 70 residues: DNA-directed RNA polymerase subunit omega (70 aa).

This sequence belongs to the RNA polymerase subunit omega family. As to quaternary structure, in cyanobacteria the RNAP catalytic core is composed of 2 alpha, 1 beta, 1 beta', 1 gamma and 1 omega subunit. When a sigma factor is associated with the core the holoenzyme is formed, which can initiate transcription.

The catalysed reaction is RNA(n) + a ribonucleoside 5'-triphosphate = RNA(n+1) + diphosphate. Promotes RNA polymerase assembly. Latches the N- and C-terminal regions of the beta' subunit thereby facilitating its interaction with the beta and alpha subunits. The protein is DNA-directed RNA polymerase subunit omega of Prochlorococcus marinus (strain NATL1A).